Here is a 470-residue protein sequence, read N- to C-terminus: Neuraminidase (470 aa).

Topologically, residues 1-14 (MNPNQKIITIGSVS) are intravirion. Residues 11-32 (GSVSLGLVVLNILLHIVSITIT) are involved in apical transport and lipid raft association. A helical transmembrane segment spans residues 15 to 35 (LGLVVLNILLHIVSITITVLV). The interval 32-86 (TVLVLPGNGNNGSCNETVIREYNETVRIEKITQWHNTNVIEYIERPESDHFMNNT) is hypervariable stalk region. Topologically, residues 36–470 (LPGNGNNGSC…AILPFDIDKM (435 aa)) are virion surface. N-linked (GlcNAc...) asparagine; by host glycosylation is found at N42, N46, N54, and N84. The head of neuraminidase stretch occupies residues 89–470 (LCDAKGFAPF…AILPFDIDKM (382 aa)). Disulfide bonds link C90-C417, C122-C127, C182-C229, C231-C236, C277-C290, C279-C288, C316-C335, and C421-C446. Residue R116 participates in substrate binding. A glycan (N-linked (GlcNAc...) asparagine; by host) is linked at N144. The active-site Proton donor/acceptor is D149. R150 contacts substrate. 275–276 (EE) is a binding site for substrate. R291 provides a ligand contact to substrate. A Ca(2+)-binding site is contributed by D292. The N-linked (GlcNAc...) asparagine; by host glycan is linked to N293. Ca(2+)-binding residues include G296 and D322. A substrate-binding site is contributed by R368. An N-linked (GlcNAc...) asparagine; by host glycan is attached at N398. Y402 serves as the catalytic Nucleophile.

Belongs to the glycosyl hydrolase 34 family. As to quaternary structure, homotetramer. The cofactor is Ca(2+). Post-translationally, N-glycosylated.

It is found in the virion membrane. The protein localises to the host apical cell membrane. It carries out the reaction Hydrolysis of alpha-(2-&gt;3)-, alpha-(2-&gt;6)-, alpha-(2-&gt;8)- glycosidic linkages of terminal sialic acid residues in oligosaccharides, glycoproteins, glycolipids, colominic acid and synthetic substrates.. Inhibited by the neuraminidase inhibitors zanamivir (Relenza) and oseltamivir (Tamiflu). These drugs interfere with the release of progeny virus from infected cells and are effective against all influenza strains. Resistance to neuraminidase inhibitors is quite rare. Its function is as follows. Catalyzes the removal of terminal sialic acid residues from viral and cellular glycoconjugates. Cleaves off the terminal sialic acids on the glycosylated HA during virus budding to facilitate virus release. Additionally helps virus spread through the circulation by further removing sialic acids from the cell surface. These cleavages prevent self-aggregation and ensure the efficient spread of the progeny virus from cell to cell. Otherwise, infection would be limited to one round of replication. Described as a receptor-destroying enzyme because it cleaves a terminal sialic acid from the cellular receptors. May facilitate viral invasion of the upper airways by cleaving the sialic acid moieties on the mucin of the airway epithelial cells. Likely to plays a role in the budding process through its association with lipid rafts during intracellular transport. May additionally display a raft-association independent effect on budding. Plays a role in the determination of host range restriction on replication and virulence. Sialidase activity in late endosome/lysosome traffic seems to enhance virus replication. This chain is Neuraminidase, found in Influenza A virus (strain A/Guinea fowl/New York/4-3587/1984 H3N8).